The sequence spans 173 residues: Disulfide bond formation protein B (173 aa).

The Cytoplasmic segment spans residues Met-1–Ala-14. Residues Trp-15 to Phe-31 form a helical membrane-spanning segment. The Periplasmic portion of the chain corresponds to Phe-32 to Ile-49. Cys-41 and Cys-44 are disulfide-bonded. A helical membrane pass occupies residues Ala-50–Pro-65. Residues Gln-66 to Trp-72 are Cytoplasmic-facing. A helical membrane pass occupies residues Ser-73 to Leu-90. The Periplasmic segment spans residues Lys-91 to Gln-145. Cys-105 and Cys-131 are oxidised to a cystine. Residues Trp-146 to Gly-164 traverse the membrane as a helical segment. The Cytoplasmic portion of the chain corresponds to Asn-165 to Ser-173.

Belongs to the DsbB family.

It is found in the cell inner membrane. Required for disulfide bond formation in some periplasmic proteins. Acts by oxidizing the DsbA protein. This is Disulfide bond formation protein B from Aeromonas hydrophila subsp. hydrophila (strain ATCC 7966 / DSM 30187 / BCRC 13018 / CCUG 14551 / JCM 1027 / KCTC 2358 / NCIMB 9240 / NCTC 8049).